A 396-amino-acid chain; its full sequence is F-box protein At2g21930 (396 aa).

In terms of domain architecture, F-box spans 19–65 (SGNSVQIPFDLIPEILKRLPVKTLARFLSVSKEYTSIIRNRDFMKSY).

The sequence is that of F-box protein At2g21930 from Arabidopsis thaliana (Mouse-ear cress).